The chain runs to 374 residues: Eukaryotic translation initiation factor 3 subunit M (374 aa).

S2 carries the N-acetylserine modification. S2 and S152 each carry phosphoserine. In terms of domain architecture, PCI spans 180 to 339 (AASKVMVELL…RKVVVSHSTH (160 aa)). K254 is subject to N6-acetyllysine. The interaction with HSV-1 and HSV-2 stretch occupies residues 344 to 374 (KQQWQQLYDTLNAWKQNLNKVKNSLLSLSDT). At S367 the chain carries Phosphoserine.

Component of the eukaryotic translation initiation factor 3 (eIF-3) complex, which is composed of 13 subunits: EIF3A, EIF3B, EIF3C, EIF3D, EIF3E, EIF3F, EIF3G, EIF3H, EIF3I, EIF3J, EIF3K, EIF3L and EIF3M. The eIF-3 complex appears to include 3 stable modules: module A is composed of EIF3A, EIF3B, EIF3G and EIF3I; module B is composed of EIF3F, EIF3H, and EIF3M; and module C is composed of EIF3C, EIF3D, EIF3E, EIF3K and EIF3L. EIF3C of module C binds EIF3B of module A and EIF3H of module B, thereby linking the three modules. EIF3J is a labile subunit that binds to the eIF-3 complex via EIF3B. The eIF-3 complex interacts with RPS6KB1 under conditions of nutrient depletion. Mitogenic stimulation leads to binding and activation of a complex composed of MTOR and RPTOR, leading to phosphorylation and release of RPS6KB1 and binding of EIF4B to eIF-3. In terms of tissue distribution, broadly expressed.

The protein localises to the cytoplasm. In terms of biological role, component of the eukaryotic translation initiation factor 3 (eIF-3) complex, which is required for several steps in the initiation of protein synthesis. The eIF-3 complex associates with the 40S ribosome and facilitates the recruitment of eIF-1, eIF-1A, eIF-2:GTP:methionyl-tRNAi and eIF-5 to form the 43S pre-initiation complex (43S PIC). The eIF-3 complex stimulates mRNA recruitment to the 43S PIC and scanning of the mRNA for AUG recognition. The eIF-3 complex is also required for disassembly and recycling of post-termination ribosomal complexes and subsequently prevents premature joining of the 40S and 60S ribosomal subunits prior to initiation. The eIF-3 complex specifically targets and initiates translation of a subset of mRNAs involved in cell proliferation, including cell cycling, differentiation and apoptosis, and uses different modes of RNA stem-loop binding to exert either translational activation or repression. Functionally, (Microbial infection) May favor virus entry in case of infection with herpes simplex virus 1 (HSV1) or herpes simplex virus 2 (HSV2). The sequence is that of Eukaryotic translation initiation factor 3 subunit M from Homo sapiens (Human).